We begin with the raw amino-acid sequence, 993 residues long: Vinculin (993 aa).

Repeat copies occupy residues 258–364 (DSDN…TKEI) and 373–480 (TNTQ…ELVD). Residues 258–480 (DSDNVTVMRK…LRNKLRELVD (223 aa)) are 2 X repeats. Residues 730–797 (ITGAGGSRPP…PPPETDDEEE (68 aa)) form a disordered region. Residues 758–768 (VHDRIYIREDI) are compositionally biased toward basic and acidic residues. A compositionally biased stretch (pro residues) spans 769 to 790 (PTPPRPPPPVEISPPPRPPPPP).

Belongs to the vinculin/alpha-catenin family. In terms of assembly, exhibits self-association properties.

The protein resides in the cytoplasm. The protein localises to the cytoskeleton. Its subcellular location is the cell junction. It localises to the adherens junction. It is found in the cell membrane. In terms of biological role, involved in cell adhesion. May be involved in the attachment of the actin-based microfilaments to the plasma membrane. This Brugia malayi (Filarial nematode worm) protein is Vinculin.